We begin with the raw amino-acid sequence, 516 residues long: Maturase K (516 aa).

This sequence belongs to the intron maturase 2 family. MatK subfamily.

It is found in the plastid. The protein localises to the chloroplast. In terms of biological role, usually encoded in the trnK tRNA gene intron. Probably assists in splicing its own and other chloroplast group II introns. The protein is Maturase K of Galanthus nivalis (Common snowdrop).